The primary structure comprises 290 residues: Eukaryotic translation initiation factor 3 subunit G (290 aa).

Positions 1-34 (MSRLGNRAADWADDEEFDDPSALPAQQVTTNKDG) are disordered. One can recognise an RRM domain in the interval 210–288 (ATLRVTNVSE…LILRVEFAKR (79 aa)).

It belongs to the eIF-3 subunit G family. In terms of assembly, component of the eukaryotic translation initiation factor 3 (eIF-3) complex.

The protein resides in the cytoplasm. Its function is as follows. RNA-binding component of the eukaryotic translation initiation factor 3 (eIF-3) complex, which is involved in protein synthesis of a specialized repertoire of mRNAs and, together with other initiation factors, stimulates binding of mRNA and methionyl-tRNAi to the 40S ribosome. The eIF-3 complex specifically targets and initiates translation of a subset of mRNAs involved in cell proliferation. This subunit can bind 18S rRNA. The polypeptide is Eukaryotic translation initiation factor 3 subunit G (tif35) (Aspergillus fumigatus (strain CBS 144.89 / FGSC A1163 / CEA10) (Neosartorya fumigata)).